Reading from the N-terminus, the 461-residue chain is Cysteine--tRNA ligase (461 aa).

Cysteine 28 contributes to the Zn(2+) binding site. Residues 30 to 40 (VTIYDLCHIGH) carry the 'HIGH' region motif. Positions 211, 236, and 240 each coordinate Zn(2+). The 'KMSKS' region signature appears at 268-272 (KMSKS). An ATP-binding site is contributed by lysine 271.

This sequence belongs to the class-I aminoacyl-tRNA synthetase family. As to quaternary structure, monomer. Requires Zn(2+) as cofactor.

Its subcellular location is the cytoplasm. It carries out the reaction tRNA(Cys) + L-cysteine + ATP = L-cysteinyl-tRNA(Cys) + AMP + diphosphate. The protein is Cysteine--tRNA ligase of Aliivibrio fischeri (strain ATCC 700601 / ES114) (Vibrio fischeri).